The following is a 485-amino-acid chain: E3 ubiquitin-protein ligase RNF14 (485 aa).

The RWD domain maps to 11 to 137; that stretch reads DELLALASIY…QFLKEETLTY (127 aa). A D-box motif is present at residues 37–45; that stretch reads RIYLDLPQN. The segment at 217 to 458 is TRIAD supradomain; it reads KLFLCSICFC…DSESPCFNRL (242 aa). Zn(2+)-binding residues include cysteine 221, cysteine 224, cysteine 239, histidine 241, cysteine 244, cysteine 247, cysteine 266, cysteine 271, cysteine 310, cysteine 315, cysteine 330, cysteine 333, cysteine 338, cysteine 341, and histidine 346. The segment at 221–271 adopts an RING-type 1 zinc-finger fold; sequence CSICFCEKLGSDCMYFLECKHVYCKACLKDYFEIQIKDGQVKCLNCPEPQC. The segment at 290 to 351 adopts an IBR-type zinc-finger fold; it reads ARYDRLLLQS…RLTYHGLSPC (62 aa). Residue serine 349 is modified to Phosphoserine. Zn(2+) contacts are provided by cysteine 351, cysteine 405, and cysteine 408. Residues 405 to 434 form an RING-type 2; atypical zinc finger; that stretch reads CPCCGTPIQKLDGCNKMTCTGCMQYFCWIC. The active site involves cysteine 418. Residues cysteine 423, cysteine 426, cysteine 431, cysteine 434, histidine 446, and cysteine 454 each coordinate Zn(2+).

It belongs to the RBR family. RNF14 subfamily. As to quaternary structure, interacts with GCN1; interaction takes place in response to ribosome collisions and is required for ubiquitination of EEF1A1/eEF1A. Interacts with the ubiquitin-conjugating enzymes UBE2E1 and UBE2E2. Interacts with AR/androgen receptor. Interacts with TCF7/TCF1, TCF7L1/TCF3 and TCF7L2/TCF4; promoting Wnt signaling. In terms of processing, RING-type zinc finger-dependent and UBE2E2-dependent autoubiquitination.

It localises to the cytoplasm. It is found in the nucleus. It carries out the reaction [E2 ubiquitin-conjugating enzyme]-S-ubiquitinyl-L-cysteine + [acceptor protein]-L-lysine = [E2 ubiquitin-conjugating enzyme]-L-cysteine + [acceptor protein]-N(6)-ubiquitinyl-L-lysine.. It functions in the pathway protein modification; protein ubiquitination. In terms of biological role, E3 ubiquitin-protein ligase that plays a key role in the RNF14-RNF25 translation quality control pathway, a pathway that takes place when a ribosome has stalled during translation, and which promotes ubiquitination and degradation of translation factors on stalled ribosomes. Recruited to stalled ribosomes by the ribosome collision sensor GCN1 and mediates 'Lys-6'-linked ubiquitination of target proteins, leading to their degradation. Mediates ubiquitination of EEF1A1/eEF1A and ETF1/eRF1 translation factors on stalled ribosomes, leading to their degradation. Also catalyzes ubiquitination of ribosomal proteins RPL0, RPL1, RPL12, RPS13 and RPS17. Specifically required to resolve RNA-protein cross-links caused by reactive aldehydes, which trigger translation stress by stalling ribosomes: acts by catalying 'Lys-6'-linked ubiquitination of RNA-protein cross-links, leading to their removal by the ATP-dependent unfoldase VCP and subsequent degradation by the proteasome. Independently of its function in the response to stalled ribosomes, acts as a regulator of transcription in Wnt signaling via its interaction with TCF transcription factors (TCF7/TCF1, TCF7L1/TCF3 and TCF7L2/TCF4). May also play a role as a coactivator for androgen- and, to a lesser extent, progesterone-dependent transcription. This chain is E3 ubiquitin-protein ligase RNF14, found in Mus musculus (Mouse).